A 292-amino-acid polypeptide reads, in one-letter code: Ribosomal protein L11 methyltransferase (292 aa).

The S-adenosyl-L-methionine site is built by threonine 144, glycine 165, aspartate 187, and asparagine 229.

It belongs to the methyltransferase superfamily. PrmA family.

It localises to the cytoplasm. It catalyses the reaction L-lysyl-[protein] + 3 S-adenosyl-L-methionine = N(6),N(6),N(6)-trimethyl-L-lysyl-[protein] + 3 S-adenosyl-L-homocysteine + 3 H(+). Methylates ribosomal protein L11. In Pseudomonas fluorescens (strain Pf0-1), this protein is Ribosomal protein L11 methyltransferase.